Reading from the N-terminus, the 115-residue chain is Nucleoid-associated protein Rpic_1036 (115 aa).

This sequence belongs to the YbaB/EbfC family. As to quaternary structure, homodimer.

It is found in the cytoplasm. The protein resides in the nucleoid. Functionally, binds to DNA and alters its conformation. May be involved in regulation of gene expression, nucleoid organization and DNA protection. In Ralstonia pickettii (strain 12J), this protein is Nucleoid-associated protein Rpic_1036.